The primary structure comprises 256 residues: Ras-related protein RabJ (256 aa).

16–23 (GSSDVGKT) contacts GTP. Residues 38–46 (LTSTIGASF) carry the Effector region motif. Residues 64 to 68 (DSAGQ) and 122 to 125 (NKID) each bind GTP. The interval 229 to 256 (NGHLQGSINGHNNQNSTNYSDNSDQCCG) is disordered. Polar residues predominate over residues 230-256 (GHLQGSINGHNNQNSTNYSDNSDQCCG). Residues cysteine 254 and cysteine 255 are each lipidated (S-geranylgeranyl cysteine).

It belongs to the small GTPase superfamily. Rab family.

Its subcellular location is the cell membrane. This is Ras-related protein RabJ (rabJ) from Dictyostelium discoideum (Social amoeba).